Consider the following 463-residue polypeptide: Glutamate--tRNA ligase 1 (463 aa).

Positions 10-20 match the 'HIGH' region motif; sequence PSPTGFLHIGS. The 'KMSKS' region signature appears at 239-243; the sequence is KLSKR. An ATP-binding site is contributed by K242.

This sequence belongs to the class-I aminoacyl-tRNA synthetase family. Glutamate--tRNA ligase type 1 subfamily. Monomer.

The protein localises to the cytoplasm. It catalyses the reaction tRNA(Glu) + L-glutamate + ATP = L-glutamyl-tRNA(Glu) + AMP + diphosphate. In terms of biological role, catalyzes the attachment of glutamate to tRNA(Glu) in a two-step reaction: glutamate is first activated by ATP to form Glu-AMP and then transferred to the acceptor end of tRNA(Glu). This is Glutamate--tRNA ligase 1 from Rickettsia canadensis (strain McKiel).